Consider the following 61-residue polypeptide: MGKVHGSLARAGKVKSQTPKVEKQEKPKQPKGRAYKRLLYVRRFVNVTNMVGGKRRMNPSS.

Positions 1-36 (MGKVHGSLARAGKVKSQTPKVEKQEKPKQPKGRAYK) are disordered.

Belongs to the eukaryotic ribosomal protein eS30 family. In terms of assembly, component of the small ribosomal subunit (SSU). Mature yeast ribosomes consist of a small (40S) and a large (60S) subunit. The 40S small subunit contains 1 molecule of ribosomal RNA (18S rRNA) and at least 33 different proteins. The large 60S subunit contains 3 rRNA molecules (25S, 5.8S and 5S rRNA) and at least 46 different proteins.

Its subcellular location is the cytoplasm. The protein resides in the nucleus. Its function is as follows. Component of the ribosome, a large ribonucleoprotein complex responsible for the synthesis of proteins in the cell. The small ribosomal subunit (SSU) binds messenger RNAs (mRNAs) and translates the encoded message by selecting cognate aminoacyl-transfer RNA (tRNA) molecules. The large subunit (LSU) contains the ribosomal catalytic site termed the peptidyl transferase center (PTC), which catalyzes the formation of peptide bonds, thereby polymerizing the amino acids delivered by tRNAs into a polypeptide chain. The nascent polypeptides leave the ribosome through a tunnel in the LSU and interact with protein factors that function in enzymatic processing, targeting, and the membrane insertion of nascent chains at the exit of the ribosomal tunnel. The chain is Small ribosomal subunit protein eS30A (rps3001) from Schizosaccharomyces pombe (strain 972 / ATCC 24843) (Fission yeast).